The chain runs to 240 residues: Large ribosomal subunit protein uL3 (240 aa).

Disordered regions lie at residues 139–164 and 215–240; these read VSHR…KMPG and DAPK…QEGV. Q151 bears the N5-methylglutamine mark. Residues 225–240 show a composition bias toward low complexity; sequence ADGGEQAAPAAEQEGV.

The protein belongs to the universal ribosomal protein uL3 family. As to quaternary structure, part of the 50S ribosomal subunit. Forms a cluster with proteins L14 and L19. Post-translationally, methylated by PrmB.

Its function is as follows. One of the primary rRNA binding proteins, it binds directly near the 3'-end of the 23S rRNA, where it nucleates assembly of the 50S subunit. The sequence is that of Large ribosomal subunit protein uL3 from Rhodopseudomonas palustris (strain BisA53).